A 384-amino-acid chain; its full sequence is tRNA 2-selenouridine synthase (384 aa).

Residues 15–138 (FVAGKPLIDL…MRQYLIGVIE (124 aa)) form the Rhodanese domain. Catalysis depends on Cys-98, which acts as the S-selanylcysteine intermediate.

The protein belongs to the SelU family. Monomer.

It carries out the reaction 5-methylaminomethyl-2-thiouridine(34) in tRNA + selenophosphate + (2E)-geranyl diphosphate + H2O + H(+) = 5-methylaminomethyl-2-selenouridine(34) in tRNA + (2E)-thiogeraniol + phosphate + diphosphate. The enzyme catalyses 5-methylaminomethyl-2-thiouridine(34) in tRNA + (2E)-geranyl diphosphate = 5-methylaminomethyl-S-(2E)-geranyl-thiouridine(34) in tRNA + diphosphate. It catalyses the reaction 5-methylaminomethyl-S-(2E)-geranyl-thiouridine(34) in tRNA + selenophosphate + H(+) = 5-methylaminomethyl-2-(Se-phospho)selenouridine(34) in tRNA + (2E)-thiogeraniol. The catalysed reaction is 5-methylaminomethyl-2-(Se-phospho)selenouridine(34) in tRNA + H2O = 5-methylaminomethyl-2-selenouridine(34) in tRNA + phosphate. Its function is as follows. Involved in the post-transcriptional modification of the uridine at the wobble position (U34) of tRNA(Lys), tRNA(Glu) and tRNA(Gln). Catalyzes the conversion of 2-thiouridine (S2U-RNA) to 2-selenouridine (Se2U-RNA). Acts in a two-step process involving geranylation of 2-thiouridine (S2U) to S-geranyl-2-thiouridine (geS2U) and subsequent selenation of the latter derivative to 2-selenouridine (Se2U) in the tRNA chain. In Shewanella sp. (strain MR-4), this protein is tRNA 2-selenouridine synthase.